The chain runs to 408 residues: Peptidase T (408 aa).

Histidine 78 is a Zn(2+) binding site. Aspartate 80 is an active-site residue. Aspartate 140 serves as a coordination point for Zn(2+). Catalysis depends on glutamate 173, which acts as the Proton acceptor. Glutamate 174, aspartate 196, and histidine 379 together coordinate Zn(2+).

The protein belongs to the peptidase M20B family. Requires Zn(2+) as cofactor.

It is found in the cytoplasm. The catalysed reaction is Release of the N-terminal residue from a tripeptide.. In terms of biological role, cleaves the N-terminal amino acid of tripeptides. The polypeptide is Peptidase T (Escherichia coli (strain UTI89 / UPEC)).